Here is a 313-residue protein sequence, read N- to C-terminus: L-lactate dehydrogenase 1 (313 aa).

NAD(+) is bound by residues Val15, Asp36, Lys41, Tyr66, and Gly80 to Ala81. Residues Gln83 and Arg89 each coordinate substrate. NAD(+) contacts are provided by residues Ser102, Val119–Asn121, and Ser144. Asn121–Asp124 contacts substrate. Asp149–Arg152 provides a ligand contact to substrate. Arg154 and His169 together coordinate beta-D-fructose 1,6-bisphosphate. The Proton acceptor role is filled by His176. Position 222 is a phosphotyrosine (Tyr222). Thr231 lines the substrate pocket.

Belongs to the LDH/MDH superfamily. LDH family. As to quaternary structure, homotetramer.

It is found in the cytoplasm. The catalysed reaction is (S)-lactate + NAD(+) = pyruvate + NADH + H(+). It functions in the pathway fermentation; pyruvate fermentation to lactate; (S)-lactate from pyruvate: step 1/1. Allosterically activated by fructose 1,6-bisphosphate (FBP). In terms of biological role, catalyzes the conversion of lactate to pyruvate. This Clostridium acetobutylicum (strain ATCC 824 / DSM 792 / JCM 1419 / IAM 19013 / LMG 5710 / NBRC 13948 / NRRL B-527 / VKM B-1787 / 2291 / W) protein is L-lactate dehydrogenase 1.